A 240-amino-acid chain; its full sequence is Aquaporin Z (240 aa).

2 helical membrane passes run 10 to 30 (AIGTFWLTFAGCGSAVIAAGF) and 35 to 55 (IGLVGVSLAFGLSVVTMAYAI). An NPA 1 motif is present at residues 64 to 66 (NPA). 3 consecutive transmembrane segments (helical) span residues 82–102 (ILPYVIAQVCGAIVAAELLYI), 131–151 (MMACFLTEVVMTMMFLFIIMG), and 160–180 (GFAPLAIGLALVMIHLVSIPV). Residues 186-188 (NPA) carry the NPA 2 motif. The helical transmembrane segment at 194-214 (ALFVGGWAMAQLWLFWVAPLI) threads the bilayer.

This sequence belongs to the MIP/aquaporin (TC 1.A.8) family. Homotetramer.

It is found in the cell inner membrane. It catalyses the reaction H2O(in) = H2O(out). Channel that permits osmotically driven movement of water in both directions. It is involved in the osmoregulation and in the maintenance of cell turgor during volume expansion in rapidly growing cells. It mediates rapid entry or exit of water in response to abrupt changes in osmolarity. The chain is Aquaporin Z from Bradyrhizobium diazoefficiens (strain JCM 10833 / BCRC 13528 / IAM 13628 / NBRC 14792 / USDA 110).